A 62-amino-acid chain; its full sequence is Sperm protamine P1 (62 aa).

The interval 1 to 62 (MARYRHSRSR…RYSRRRRRRY (62 aa)) is disordered.

It belongs to the protamine P1 family. As to expression, testis.

It is found in the nucleus. Its subcellular location is the chromosome. Functionally, protamines substitute for histones in the chromatin of sperm during the haploid phase of spermatogenesis. They compact sperm DNA into a highly condensed, stable and inactive complex. The chain is Sperm protamine P1 (PRM1) from Dendrolagus dorianus (Doria's tree-kangaroo).